Reading from the N-terminus, the 248-residue chain is Small ribosomal subunit protein eS1 (248 aa).

The segment at 1-21 (MAVGKDKRISKGKKGGKKKIV) is disordered.

This sequence belongs to the eukaryotic ribosomal protein eS1 family. Component of the small ribosomal subunit. Mature ribosomes consist of a small (40S) and a large (60S) subunit. The 40S subunit contains about 33 different proteins and 1 molecule of RNA (18S). The 60S subunit contains about 49 different proteins and 3 molecules of RNA (25S, 5.8S and 5S).

The protein resides in the cytoplasm. The sequence is that of Small ribosomal subunit protein eS1 from Syntrichia ruralis (Great hairy screw-moss).